Consider the following 214-residue polypeptide: Adenylate kinase (214 aa).

An ATP-binding site is contributed by 10-15; the sequence is GTGKGT. The interval 30 to 59 is NMP; the sequence is STGDILRENIQKKNTIGKKIHNILKNGELV. Residues T31, R36, 57 to 59, 85 to 88, and Q92 contribute to the AMP site; these read ELV and GFPR. The tract at residues 122 to 159 is LID; sequence GRRVHTPSGRIYNINYNPPREEGKDDLTQEKLTIREDD. ATP is bound by residues R123 and 132-133; that span reads IY. R156 and R167 together coordinate AMP. Q200 serves as a coordination point for ATP.

It belongs to the adenylate kinase family. As to quaternary structure, monomer.

Its subcellular location is the cytoplasm. It catalyses the reaction AMP + ATP = 2 ADP. It participates in purine metabolism; AMP biosynthesis via salvage pathway; AMP from ADP: step 1/1. Functionally, catalyzes the reversible transfer of the terminal phosphate group between ATP and AMP. Plays an important role in cellular energy homeostasis and in adenine nucleotide metabolism. The polypeptide is Adenylate kinase (Buchnera aphidicola subsp. Schizaphis graminum (strain Sg)).